A 309-amino-acid polypeptide reads, in one-letter code: Low density lipoprotein receptor adapter protein 1-B (309 aa).

In terms of domain architecture, PID spans 41–195 (LLEGMLFHLK…SDGEGASSSQ (155 aa)). Residues 179–201 (DKREKSGSDGEGASSSQSDGSSS) form a disordered region. Positions 189–201 (EGASSSQSDGSSS) are enriched in low complexity. The Clathrin box motif lies at 213 to 217 (LLDFE). The segment at 250–277 (WELDDGLDEAFARLAESRTNPQVLDIGL) is AP-2 complex binding. A [DE]-X(1,2)-F-X-X-[FL]-X-X-X-R motif motif is present at residues 258–267 (EAFARLAESR).

Interacts (via PID domain) with ldlr (via NPXY motif). Binds to soluble clathrin trimers and to the adapter protein complex 2 (AP-2, beta 2 subunit). Binds to phosphoinositides, which regulate clathrin bud assembly at the cell surface. Interacts with the VLDL receptor (vldlr). Interacts with the vitellogenin receptor. In terms of tissue distribution, expressed at high level during oogenesis and embryogenesis. Found at low level in the adult liver and spleen. Found at very low level in testis and heart. Not found in the oocyte vegetal cortex.

The protein resides in the cytoplasm. Functionally, adapter protein (clathrin-associated sorting protein (CLASP)) required for efficient endocytosis of the LDL receptor (LDLR). Also involved in the vitellogenin receptor mediated endocytosis of nutrients during oogenesis. The sequence is that of Low density lipoprotein receptor adapter protein 1-B from Xenopus laevis (African clawed frog).